A 503-amino-acid polypeptide reads, in one-letter code: MFYAHAFGGYDENLHAFPRISSTVANDVRKYSVVSVYNKKYNIVKNKYMWCNSQVNKRYIGALLPMFECNEYLQIGDPIHDLEGNQISIVTYRHKNYYALSGIGYESLDLCLEGVGIHHHVLETGNAVYGKVQHEYSTIKEKAKEMNALKPGPIIDYHVWIGDCVCQVTTVDVHGKEIMRMRFKRGAVLPIPNLVKVKVGEENDTINLSTSISALLNSGGGTIEVTSKEERVDYVLMKRLESIHHLWSVVYDHLNVVNGEERCYIHMHSSHQSPMLSTVKTNLYMKTMGACLQMDSMEALEYLSELKESGGRSPRPELQKFEYPDGVKDTESIERLAEEFFNRSELQAGESVKFGNSINVKHTSVSAKQLRTRIRQQLPSILSSFANTKGGYLFIGVDNNTHKVIGFTVGHDYLKLVERDIEKYIQKLPVVHFCKKKEDIKYACRFIKVYKPGDETTSTYVCAIKVERCCCAVFADWPESWYMDTSGSMKKYSPDEWVSHIKF.

The interval 1-236 (MFYAHAFGGY…SKEERVDYVL (236 aa)) is poxin-like. Catalysis depends on H15, which acts as the Proton donor. The active-site Shared with catalytic histidine of dimeric partner is Y136. The active-site Proton acceptor; shared with catalytic histidine of dimeric partner is K140. Residues 237 to 503 (MKRLESIHHL…PDEWVSHIKF (267 aa)) are schlafen-like.

It in the N-terminal section; belongs to the poxin family. In the C-terminal section; belongs to the Schlafen protein family. Subgroup poxviridae B3 subfamily. In terms of assembly, homodimer.

The catalysed reaction is 2',3'-cGAMP + H2O = Gp(2'-5')Ap(3') + H(+). Its function is as follows. Nuclease that is responsible for viral evasion of host cGAS-STING innate immunity. Cleaves 2',3'-cGAMP which is produced by host cGAS following recognition of intracellular foreign DNA and blocks the subsequent 2',3'-cGAMP-mediated activation of TMEM173/STING which normally spreads to adjacent cells and activates the interferon and NF-kappa-B immune responses. The sequence is that of Poxin-Schlafen (OPG188) from Cynomys gunnisoni (Gunnison's prairie dog).